The chain runs to 86 residues: Small ribosomal subunit protein bS18 (86 aa).

It belongs to the bacterial ribosomal protein bS18 family. As to quaternary structure, part of the 30S ribosomal subunit. Forms a tight heterodimer with protein bS6.

In terms of biological role, binds as a heterodimer with protein bS6 to the central domain of the 16S rRNA, where it helps stabilize the platform of the 30S subunit. The protein is Small ribosomal subunit protein bS18 of Campylobacter concisus (strain 13826).